Consider the following 542-residue polypeptide: Signal peptide peptidase-like 5 (542 aa).

Positions 1–23 (MAAATAAVFALLMASALAGAAAG) are cleaved as a signal peptide. Residues 24–192 (GDIVHHDDEA…PDRPVVDTAE (169 aa)) are Lumenal-facing. N-linked (GlcNAc...) asparagine glycans are attached at residues N79 and N145. The PA domain maps to 92–167 (CTSPKEKVSG…LPRDAGFALH (76 aa)). A helical membrane pass occupies residues 193–213 (VFLWLMAVGTVLCASYWSAWS). At 214-245 (AREALCEQEKLLKDGREVLLNVENGSSSGMID) the chain is on the cytoplasmic side. A helical transmembrane segment spans residues 246 to 266 (INVASAIMFVVVASCFLIMLY). Residues 267–275 (KMMSSWFVE) are Lumenal-facing. The helical transmembrane segment at 276–296 (LLVVIFCVGGVEGLQTCLVAL) threads the bilayer. Topologically, residues 297-316 (LSRWFRAASESFFKVPFFGA) are cytoplasmic. Residues 317-337 (VSYLTLAVSPFCIVFAVLWAV) form a helical membrane-spanning segment. The Lumenal segment spans residues 338 to 342 (HRHFT). Residues 343–363 (YAWIGQDILGIALIITVIQIV) traverse the membrane as a helical segment. Residues 364–367 (RVPN) are Cytoplasmic-facing. A helical membrane pass occupies residues 368 to 388 (LKVGSVLLSCAFFYDIFWVFV). The active site involves D382. Over 389–426 (SKRWFHESVMIVVARGDKTDEDGVPMLLKIPRMFDPWG) the chain is Lumenal. The helical transmembrane segment at 427 to 447 (GYSIIGFGDILLPGLLVAFAL) threads the bilayer. D435 is an active-site residue. The Cytoplasmic segment spans residues 448-459 (RYDWAAKKSLQT). Residues 460–480 (GYFLWSMVAYGSGLLITYVAL) form a helical membrane-spanning segment. Topologically, residues 481–486 (NLMDGH) are lumenal. The chain crosses the membrane as a helical span at residues 487-507 (GQPALLYIVPFTLGALISLGW). The short motif at 489–491 (PAL) is the PAL element. The Cytoplasmic segment spans residues 508 to 542 (KRGELWNLWSKGEPERVCPHHMHMQPQPKTPPLVQ).

The protein belongs to the peptidase A22B family. In terms of processing, glycosylated.

It is found in the endosome membrane. Intramembrane-cleaving aspartic protease (I-CLiP) that cleaves type II membrane signal peptides in the hydrophobic plane of the membrane. In Oryza sativa subsp. japonica (Rice), this protein is Signal peptide peptidase-like 5 (SPPL5).